The sequence spans 525 residues: Cytochrome P450 4V2 (525 aa).

A helical membrane pass occupies residues 13–33; sequence LLLWGAASAVSVAGATVLLNI. Residues Glu329 and Cys467 each coordinate heme.

This sequence belongs to the cytochrome P450 family. It depends on heme as a cofactor.

It localises to the endoplasmic reticulum membrane. It carries out the reaction dodecanoate + reduced [NADPH--hemoprotein reductase] + O2 = 12-hydroxydodecanoate + oxidized [NADPH--hemoprotein reductase] + H2O + H(+). It catalyses the reaction tetradecanoate + reduced [NADPH--hemoprotein reductase] + O2 = 14-hydroxytetradecanoate + oxidized [NADPH--hemoprotein reductase] + H2O + H(+). The catalysed reaction is hexadecanoate + reduced [NADPH--hemoprotein reductase] + O2 = 16-hydroxyhexadecanoate + oxidized [NADPH--hemoprotein reductase] + H2O + H(+). The enzyme catalyses (5Z,8Z,11Z,14Z,17Z)-eicosapentaenoate + reduced [NADPH--hemoprotein reductase] + O2 = 20-hydroxy-(5Z,8Z,11Z,14Z,17Z)-eicosapentaenoate + oxidized [NADPH--hemoprotein reductase] + H2O + H(+). It carries out the reaction (4Z,7Z,10Z,13Z,16Z,19Z)-docosahexaenoate + reduced [NADPH--hemoprotein reductase] + O2 = 22-hydroxy-(4Z,7Z,10Z,13Z,16Z,19Z)-docosahexaenoate + oxidized [NADPH--hemoprotein reductase] + H2O + H(+). Its pathway is lipid metabolism; fatty acid metabolism. With respect to regulation, inhibited by N-hydroxy-N'-(4-n-butyl-2-methylphenyl formamidine)(HET0016) with an IC(50) of 38 nM. In terms of biological role, a cytochrome P450 monooxygenase involved in fatty acid metabolism in the eye. Catalyzes the omega-hydroxylation of polyunsaturated fatty acids (PUFAs) docosahexaenoate (DHA) and its precursor eicosapentaenoate (EPA), and may contribute to the homeostasis of these retinal PUFAs. Omega hydroxylates saturated fatty acids such as laurate, myristate and palmitate, the catalytic efficiency decreasing in the following order: myristate &gt; laurate &gt; palmitate (C14&gt;C12&gt;C16). Mechanistically, uses molecular oxygen inserting one oxygen atom into a substrate, and reducing the second into a water molecule, with two electrons provided by NADPH via cytochrome P450 reductase (CPR; NADPH-ferrihemoprotein reductase). This Rattus norvegicus (Rat) protein is Cytochrome P450 4V2 (Cyp4v2).